The following is a 314-amino-acid chain: tRNA dimethylallyltransferase (314 aa).

A disordered region spans residues 1–25 (MAEEPQRSPAPTSPFAFTVPSNSLS). 40 to 47 (GPTASGKS) serves as a coordination point for ATP. Substrate is bound at residue 42-47 (TASGKS).

The protein belongs to the IPP transferase family. In terms of assembly, monomer. It depends on Mg(2+) as a cofactor.

The enzyme catalyses adenosine(37) in tRNA + dimethylallyl diphosphate = N(6)-dimethylallyladenosine(37) in tRNA + diphosphate. Catalyzes the transfer of a dimethylallyl group onto the adenine at position 37 in tRNAs that read codons beginning with uridine, leading to the formation of N6-(dimethylallyl)adenosine (i(6)A). The sequence is that of tRNA dimethylallyltransferase from Cereibacter sphaeroides (strain ATCC 17023 / DSM 158 / JCM 6121 / CCUG 31486 / LMG 2827 / NBRC 12203 / NCIMB 8253 / ATH 2.4.1.) (Rhodobacter sphaeroides).